Reading from the N-terminus, the 371-residue chain is Aspartate-semialdehyde dehydrogenase (371 aa).

NADP(+) is bound by residues 9 to 12 (RGMV), 37 to 38 (TS), and Gln73. Arg102 lines the phosphate pocket. The active-site Acyl-thioester intermediate is Cys135. Substrate is bound at residue Gln162. Residues 165–166 (SG) and Pro193 contribute to the NADP(+) site. Glu241 contacts substrate. Lys244 contributes to the phosphate binding site. Arg268 lines the substrate pocket. His275 acts as the Proton acceptor in catalysis. Gln351 contributes to the NADP(+) binding site.

This sequence belongs to the aspartate-semialdehyde dehydrogenase family. In terms of assembly, homodimer.

The enzyme catalyses L-aspartate 4-semialdehyde + phosphate + NADP(+) = 4-phospho-L-aspartate + NADPH + H(+). It functions in the pathway amino-acid biosynthesis; L-lysine biosynthesis via DAP pathway; (S)-tetrahydrodipicolinate from L-aspartate: step 2/4. The protein operates within amino-acid biosynthesis; L-methionine biosynthesis via de novo pathway; L-homoserine from L-aspartate: step 2/3. Its pathway is amino-acid biosynthesis; L-threonine biosynthesis; L-threonine from L-aspartate: step 2/5. Catalyzes the NADPH-dependent formation of L-aspartate-semialdehyde (L-ASA) by the reductive dephosphorylation of L-aspartyl-4-phosphate. In Neisseria meningitidis serogroup B (strain ATCC BAA-335 / MC58), this protein is Aspartate-semialdehyde dehydrogenase.